The sequence spans 275 residues: tRNA pseudouridine synthase A (275 aa).

Asp-56 (nucleophile) is an active-site residue. Tyr-109 lines the substrate pocket.

This sequence belongs to the tRNA pseudouridine synthase TruA family.

The enzyme catalyses uridine(38/39/40) in tRNA = pseudouridine(38/39/40) in tRNA. Its function is as follows. Formation of pseudouridine at positions 38, 39 and 40 in the anticodon stem and loop of transfer RNAs. The chain is tRNA pseudouridine synthase A from Methanothermobacter thermautotrophicus (strain ATCC 29096 / DSM 1053 / JCM 10044 / NBRC 100330 / Delta H) (Methanobacterium thermoautotrophicum).